The following is a 238-amino-acid chain: MAAALAVRRAGSAPAFGPEALTPDWENREVSTGTTIMAVQFNGGVVLGADSRTTTGSYIANRVTDKLTPIHDHIFCCRSGSAADTQAVADAVTYQLGFHSIELNEPPLVHTAASLFKEMCYRYREDLMAGIIIAGWDPQEGGQVYSVPMGGMMVRQSFAIGGSGSSYIYGYVDATYREGMTKDECLQFTANALALAMERDGSSGGVIRLAAIQESGVERQVLLGDQIPKFTIATLPPP.

A2 is modified (N-acetylalanine). A propeptide spans A2 to G33 (removed in mature form). The active-site Nucleophile is the T34. Residue T68 is modified to Phosphothreonine.

Belongs to the peptidase T1B family. As to quaternary structure, the 26S proteasome consists of a 20S proteasome core and two 19S regulatory subunits. The 20S proteasome core is a barrel-shaped complex made of 28 subunits that are arranged in four stacked rings. The two outer rings are each formed by seven alpha subunits, and the two inner rings are formed by seven beta subunits. The proteolytic activity is exerted by three beta-subunits PSMB5, PSMB6 and PSMB7.

The protein localises to the cytoplasm. It is found in the nucleus. It carries out the reaction Cleavage of peptide bonds with very broad specificity.. Component of the 20S core proteasome complex involved in the proteolytic degradation of most intracellular proteins. This complex plays numerous essential roles within the cell by associating with different regulatory particles. Associated with two 19S regulatory particles, forms the 26S proteasome and thus participates in the ATP-dependent degradation of ubiquitinated proteins. The 26S proteasome plays a key role in the maintenance of protein homeostasis by removing misfolded or damaged proteins that could impair cellular functions, and by removing proteins whose functions are no longer required. Associated with the PA200 or PA28, the 20S proteasome mediates ubiquitin-independent protein degradation. This type of proteolysis is required in several pathways including spermatogenesis (20S-PA200 complex) or generation of a subset of MHC class I-presented antigenic peptides (20S-PA28 complex). Within the 20S core complex, PSMB6 displays a peptidylglutamyl-hydrolyzing activity also termed postacidic or caspase-like activity, meaning that the peptides bond hydrolysis occurs directly after acidic residues. The chain is Proteasome subunit beta type-6 (Psmb6) from Mus musculus (Mouse).